Here is a 137-residue protein sequence, read N- to C-terminus: Sec-independent protein translocase protein TatB (137 aa).

Residues 2-22 (FANIGWGEMLILVIAGLVILG) form a helical membrane-spanning segment. The tract at residues 92-137 (FFTGKFDQQNGKPAAGQEKPVTPVNPPVTATPPSESTATPFDSDAT) is disordered. Residues 122–131 (TPPSESTATP) are compositionally biased toward low complexity.

The protein belongs to the TatB family. As to quaternary structure, the Tat system comprises two distinct complexes: a TatABC complex, containing multiple copies of TatA, TatB and TatC subunits, and a separate TatA complex, containing only TatA subunits. Substrates initially bind to the TatABC complex, which probably triggers association of the separate TatA complex to form the active translocon.

It localises to the cell membrane. Part of the twin-arginine translocation (Tat) system that transports large folded proteins containing a characteristic twin-arginine motif in their signal peptide across membranes. Together with TatC, TatB is part of a receptor directly interacting with Tat signal peptides. TatB may form an oligomeric binding site that transiently accommodates folded Tat precursor proteins before their translocation. The protein is Sec-independent protein translocase protein TatB of Mycobacterium sp. (strain JLS).